A 367-amino-acid polypeptide reads, in one-letter code: Heat-inducible transcription repressor HrcA (367 aa).

This sequence belongs to the HrcA family.

Functionally, negative regulator of class I heat shock genes (grpE-dnaK-dnaJ and groELS operons). Prevents heat-shock induction of these operons. The sequence is that of Heat-inducible transcription repressor HrcA from Acaryochloris marina (strain MBIC 11017).